Here is a 601-residue protein sequence, read N- to C-terminus: uncharacterized protein (601 aa).

The protein belongs to the chlamydial CPn_1016/CT_858/TC_0248 family.

This is an uncharacterized protein from Chlamydia muridarum (strain MoPn / Nigg).